Here is a 406-residue protein sequence, read N- to C-terminus: Sorting nexin-6 (406 aa).

An N-acetylmethionine modification is found at Met-1. Met-2 bears the N-acetylmethionine; in Sorting nexin-6, N-terminally processed mark. The segment at 2–179 (MEGLDDGPDF…NQDLSVRGKN (178 aa)) is interaction with PIM1. One can recognise a PX domain in the interval 26 to 173 (LQSDAALQVD…HVFLEYNQDL (148 aa)). A 1,2-diacyl-sn-glycero-3-phospho-(1D-myo-inositol-4,5-bisphosphate) is bound by residues 41–47 (SERDRVK), 100–106 (FDASREK), and 114–117 (EGSM). 2 positions are modified to phosphoserine: Ser-116 and Ser-194. Positions 182–199 (EKLEDFFKNMVKSADGVI) are membrane-binding amphipathic helix. The 204-residue stretch at 203–406 (VKDVDDFFEH…NCLAVLNGDT (204 aa)) folds into the BAR domain.

This sequence belongs to the sorting nexin family. As to quaternary structure, forms heterodimers with BAR domain-containing sorting nexins SNX1 and SNX2. The heterodimers are proposed to self-assemble into helical arrays on the membrane to stabilize and expand local membrane curvature underlying endosomal tubule formation. Thought to be a component of the originally described retromer complex (also called SNX-BAR retromer) which is a pentamer containing the heterotrimeric retromer cargo-selective complex (CSC), also described as vacuolar protein sorting subcomplex (VPS), and a heterodimeric membrane-deforming subcomplex formed between SNX1 or SNX2 and SNX5 or SNX6 (also called SNX-BAR subcomplex); the respective CSC and SNX-BAR subcomplexes associate with low affinity. Interacts with SNX1, SNX2, VPS26A, VPS29, VPS35, TGFB receptors, BACE1, BRMS1, PIP5K1C. Interacts with DCTN1; the association with DCTN1 is involved in movement of retromer-c ontaining vesicles toward the TGN. Interacts with PIM1; translocating SNX6 to the nucleus. Interacts with CDKN1B and GIT1. Post-translationally, in vitro phosphorylated by PIM1; not affecting PIM1-dependent nuclear translocation.

The protein localises to the early endosome membrane. It is found in the cytoplasmic vesicle. It localises to the cytoplasm. Its subcellular location is the nucleus. Involved in several stages of intracellular trafficking. Interacts with membranes phosphatidylinositol 3,4-bisphosphate and/or phosphatidylinositol 4,5-bisphosphate. Acts in part as component of the retromer membrane-deforming SNX-BAR subcomplex. The SNX-BAR retromer mediates retrograde transport of cargo proteins from endosomes to the trans-Golgi network (TGN) and is involved in endosome-to-plasma membrane transport for cargo protein recycling. The SNX-BAR subcomplex functions to deform the donor membrane into a tubular profile called endosome-to-TGN transport carrier (ETC). Does not have in vitro vesicle-to-membrane remodeling activity. Involved in retrograde endosome-to-TGN transport of lysosomal enzyme receptor IGF2R. May function as link between transport vesicles and dynactin. Negatively regulates retrograde transport of BACE1 from the cell surface to the trans-Golgi network. Involved in E-cadherin sorting and degradation; inhibits PIP5K1C-mediated E-cadherin degradation. In association with GIT1 involved in EGFR degradation. Promotes lysosomal degradation of CDKN1B. May contribute to transcription regulation. This Mus musculus (Mouse) protein is Sorting nexin-6 (Snx6).